A 512-amino-acid polypeptide reads, in one-letter code: Glutamyl-tRNA(Gln) amidotransferase subunit A (512 aa).

Active-site charge relay system residues include Lys-82 and Ser-157. The active-site Acyl-ester intermediate is the Ser-181.

This sequence belongs to the amidase family. GatA subfamily. Heterotrimer of A, B and C subunits.

The enzyme catalyses L-glutamyl-tRNA(Gln) + L-glutamine + ATP + H2O = L-glutaminyl-tRNA(Gln) + L-glutamate + ADP + phosphate + H(+). Functionally, allows the formation of correctly charged Gln-tRNA(Gln) through the transamidation of misacylated Glu-tRNA(Gln) in organisms which lack glutaminyl-tRNA synthetase. The reaction takes place in the presence of glutamine and ATP through an activated gamma-phospho-Glu-tRNA(Gln). This is Glutamyl-tRNA(Gln) amidotransferase subunit A from Bordetella bronchiseptica (strain ATCC BAA-588 / NCTC 13252 / RB50) (Alcaligenes bronchisepticus).